The primary structure comprises 177 residues: Plasmid transfer protein TraF (177 aa).

An N-terminal signal peptide occupies residues 1-30 (MSRFQRLTKYVAIGGGAALLLAGAAYLAGA).

It belongs to the peptidase S26C family.

The protein resides in the periplasm. Its function is as follows. Required for donor-specific phage sensitivity. May be involved in pilus assembly. The protein is Plasmid transfer protein TraF (traF) of Escherichia coli.